The sequence spans 507 residues: Cytochrome P450 71A4 (507 aa).

A helical membrane pass occupies residues 3–23 (VPCLWYSLLILLLLFIFLLIH). A heme-binding site is contributed by C448.

Belongs to the cytochrome P450 family. Requires heme as cofactor.

The protein resides in the membrane. In terms of biological role, may have a role in maturation, such as during flavor formation or other metabolite production specific to aging tissues. The chain is Cytochrome P450 71A4 (CYP71A4) from Solanum melongena (Eggplant).